The following is a 637-amino-acid chain: Chaperone protein HtpG (637 aa).

The segment at M1–R345 is a; substrate-binding. The b stretch occupies residues E346 to K562. The tract at residues L563–K637 is c.

The protein belongs to the heat shock protein 90 family. As to quaternary structure, homodimer.

It localises to the cytoplasm. Molecular chaperone. Has ATPase activity. This is Chaperone protein HtpG from Shewanella sp. (strain MR-4).